The sequence spans 363 residues: Uroporphyrinogen decarboxylase (363 aa).

Residues 36–40 (RQAGR), aspartate 85, tyrosine 160, serine 215, and histidine 339 each bind substrate.

Belongs to the uroporphyrinogen decarboxylase family. As to quaternary structure, homodimer.

The protein resides in the cytoplasm. The catalysed reaction is uroporphyrinogen III + 4 H(+) = coproporphyrinogen III + 4 CO2. The protein operates within porphyrin-containing compound metabolism; protoporphyrin-IX biosynthesis; coproporphyrinogen-III from 5-aminolevulinate: step 4/4. Catalyzes the decarboxylation of four acetate groups of uroporphyrinogen-III to yield coproporphyrinogen-III. This Saccharopolyspora erythraea (strain ATCC 11635 / DSM 40517 / JCM 4748 / NBRC 13426 / NCIMB 8594 / NRRL 2338) protein is Uroporphyrinogen decarboxylase.